The sequence spans 294 residues: Elongation factor Ts (294 aa).

The interval 79 to 82 is involved in Mg(2+) ion dislocation from EF-Tu; it reads TDFV.

This sequence belongs to the EF-Ts family.

The protein localises to the cytoplasm. In terms of biological role, associates with the EF-Tu.GDP complex and induces the exchange of GDP to GTP. It remains bound to the aminoacyl-tRNA.EF-Tu.GTP complex up to the GTP hydrolysis stage on the ribosome. The protein is Elongation factor Ts of Oceanobacillus iheyensis (strain DSM 14371 / CIP 107618 / JCM 11309 / KCTC 3954 / HTE831).